The following is a 209-amino-acid chain: Peptidyl-tRNA hydrolase (209 aa).

TRNA is bound at residue Tyr-14. His-19 serves as the catalytic Proton acceptor. TRNA contacts are provided by Tyr-68, Asn-70, and Asn-116.

Belongs to the PTH family. Monomer.

Its subcellular location is the cytoplasm. The enzyme catalyses an N-acyl-L-alpha-aminoacyl-tRNA + H2O = an N-acyl-L-amino acid + a tRNA + H(+). Hydrolyzes ribosome-free peptidyl-tRNAs (with 1 or more amino acids incorporated), which drop off the ribosome during protein synthesis, or as a result of ribosome stalling. Functionally, catalyzes the release of premature peptidyl moieties from peptidyl-tRNA molecules trapped in stalled 50S ribosomal subunits, and thus maintains levels of free tRNAs and 50S ribosomes. The protein is Peptidyl-tRNA hydrolase of Phenylobacterium zucineum (strain HLK1).